Consider the following 500-residue polypeptide: NAD(P)H-quinone oxidoreductase chain 4, chloroplastic (500 aa).

The next 14 helical transmembrane spans lie at 4-24 (FPWL…IFFF), 35-55 (YTIC…CYHF), 87-107 (IGPV…AWPV), 113-130 (LFHF…GSFS), 134-154 (LLLF…LLSM), 167-187 (FILY…GMGL), 208-228 (ALEI…LPII), 242-262 (HYST…YGLV), 272-292 (AHSI…IYAA), 305-325 (IAYS…SITD), 330-350 (GAIL…FLAG), 386-406 (LALP…GIIT), 416-436 (ILIT…SLSM), and 463-483 (FVSI…DFVF).

The protein belongs to the complex I subunit 4 family.

It is found in the plastid. The protein resides in the chloroplast thylakoid membrane. It carries out the reaction a plastoquinone + NADH + (n+1) H(+)(in) = a plastoquinol + NAD(+) + n H(+)(out). The catalysed reaction is a plastoquinone + NADPH + (n+1) H(+)(in) = a plastoquinol + NADP(+) + n H(+)(out). This Nandina domestica (Heavenly bamboo) protein is NAD(P)H-quinone oxidoreductase chain 4, chloroplastic.